The chain runs to 271 residues: MSEKPVIFFDSGIGGLTVLKEARILIPELQFVYVADDAGFPYGAWEEDVLKGRILKVFTNLLKLYTPALCVIACNTASTLMISDLRQEFPHIPFVGTVPAIKSAAAQTKSGLISVLATPGTVKRAYTHELISSFANQCHVELVGSKKLATFAENYLRGYPIDYEELRHEILPCFVEKNGKYTDVIVLACTHYPFLISLFHKQALWSVNWIDPAKAIARHTRSLLLETMKNKSSKKNIKNYALFTSQNIDFVTERLLQRFNLNIMKGVDFGV.

Residues 10–11 (DS) and 42–43 (YG) contribute to the substrate site. The active-site Proton donor/acceptor is the cysteine 74. 75–76 (NT) is a substrate binding site. Cysteine 189 acts as the Proton donor/acceptor in catalysis. 190–191 (TH) serves as a coordination point for substrate.

It belongs to the aspartate/glutamate racemases family.

The enzyme catalyses L-glutamate = D-glutamate. The protein operates within cell wall biogenesis; peptidoglycan biosynthesis. Its function is as follows. Provides the (R)-glutamate required for cell wall biosynthesis. In Bartonella bacilliformis (strain ATCC 35685 / KC583 / Herrer 020/F12,63), this protein is Glutamate racemase.